We begin with the raw amino-acid sequence, 247 residues long: NADH dehydrogenase [ubiquinone] flavoprotein 2, mitochondrial (247 aa).

The N-terminal 40 residues, 1 to 40 (MFRSLLKRTTFLNQLNKSNGFNRNYFKQSTLTRSDALSRH), are a transit peptide targeting the mitochondrion. Positions 135, 140, 176, and 180 each coordinate [2Fe-2S] cluster. Residues 211–247 (NKPTKIGPQTHRKAAEGPQGKTTLLEPPVGPTCRDDL) are disordered.

This sequence belongs to the complex I 24 kDa subunit family. In terms of assembly, complex I is composed of 45 different subunits. This is a component of the flavoprotein-sulfur (FP) fragment of the enzyme. [2Fe-2S] cluster is required as a cofactor.

It localises to the mitochondrion inner membrane. It carries out the reaction a ubiquinone + NADH + 5 H(+)(in) = a ubiquinol + NAD(+) + 4 H(+)(out). Its function is as follows. Core subunit of the mitochondrial membrane respiratory chain NADH dehydrogenase (Complex I) that is believed to belong to the minimal assembly required for catalysis. Complex I functions in the transfer of electrons from NADH to the respiratory chain. The immediate electron acceptor for the enzyme is believed to be ubiquinone. This chain is NADH dehydrogenase [ubiquinone] flavoprotein 2, mitochondrial (ndufv2), found in Dictyostelium discoideum (Social amoeba).